We begin with the raw amino-acid sequence, 1094 residues long: Isoleucine--tRNA ligase (1094 aa).

The short motif at 53–63 (PFANGLPHYGH) is the 'HIGH' region element. Residues 624 to 628 (KLSKR) carry the 'KMSKS' region motif. Position 627 (K627) interacts with ATP.

The protein belongs to the class-I aminoacyl-tRNA synthetase family. IleS type 2 subfamily. As to quaternary structure, monomer. Requires Zn(2+) as cofactor.

Its subcellular location is the cytoplasm. It catalyses the reaction tRNA(Ile) + L-isoleucine + ATP = L-isoleucyl-tRNA(Ile) + AMP + diphosphate. In terms of biological role, catalyzes the attachment of isoleucine to tRNA(Ile). As IleRS can inadvertently accommodate and process structurally similar amino acids such as valine, to avoid such errors it has two additional distinct tRNA(Ile)-dependent editing activities. One activity is designated as 'pretransfer' editing and involves the hydrolysis of activated Val-AMP. The other activity is designated 'posttransfer' editing and involves deacylation of mischarged Val-tRNA(Ile). In Rickettsia felis (strain ATCC VR-1525 / URRWXCal2) (Rickettsia azadi), this protein is Isoleucine--tRNA ligase.